The primary structure comprises 131 residues: Small ribosomal subunit protein bS6 (131 aa).

The interval 100-131 is disordered; that stretch reads SPMVKAKDERRERREDFANETSDDADAGDSEE. Positions 104-116 are enriched in basic and acidic residues; it reads KAKDERRERREDF. A compositionally biased stretch (acidic residues) spans 120–131; the sequence is TSDDADAGDSEE.

This sequence belongs to the bacterial ribosomal protein bS6 family.

In terms of biological role, binds together with bS18 to 16S ribosomal RNA. The polypeptide is Small ribosomal subunit protein bS6 (Erwinia tasmaniensis (strain DSM 17950 / CFBP 7177 / CIP 109463 / NCPPB 4357 / Et1/99)).